Here is a 200-residue protein sequence, read N- to C-terminus: Peptidyl-tRNA hydrolase (200 aa).

Tyr16 contacts tRNA. The active-site Proton acceptor is His21. The tRNA site is built by Phe67, Asn69, and Asn115.

The protein belongs to the PTH family. Monomer.

It is found in the cytoplasm. The catalysed reaction is an N-acyl-L-alpha-aminoacyl-tRNA + H2O = an N-acyl-L-amino acid + a tRNA + H(+). Hydrolyzes ribosome-free peptidyl-tRNAs (with 1 or more amino acids incorporated), which drop off the ribosome during protein synthesis, or as a result of ribosome stalling. In terms of biological role, catalyzes the release of premature peptidyl moieties from peptidyl-tRNA molecules trapped in stalled 50S ribosomal subunits, and thus maintains levels of free tRNAs and 50S ribosomes. In Prochlorococcus marinus (strain AS9601), this protein is Peptidyl-tRNA hydrolase.